The primary structure comprises 214 residues: Variable small protein 1 (214 aa).

An N-terminal signal peptide occupies residues 1 to 18; it reads MRKRISAIIMTLFMVFMS. Residue cysteine 19 is the site of N-palmitoyl cysteine attachment. Residue cysteine 19 is the site of S-diacylglycerol cysteine attachment.

Belongs to the variable small protein (Vsp) family.

It is found in the cell outer membrane. The Vlp and Vsp proteins are antigenically distinct proteins, only one vlp or vsp gene is transcriptionally active at any one time. Switching between these genes is a mechanism of host immune response evasion. The chain is Variable small protein 1 from Borrelia hermsii.